The primary structure comprises 212 residues: uncharacterized protein (212 aa).

Residues G53, E74, and D97 each contribute to the S-adenosyl-L-methionine site.

The protein belongs to the methyltransferase superfamily. YrrT family.

In terms of biological role, could be a S-adenosyl-L-methionine-dependent methyltransferase. This is an uncharacterized protein from Bacillus cereus (strain ATCC 10987 / NRS 248).